We begin with the raw amino-acid sequence, 355 residues long: MSEEQFGGDGAAAAATAAVGGSAGEQEGAMVAAAAQGPAAAAGSGSGGGGSAAGGTEGGSAEAEGAKIDASKNEEDEGHSNSSPRHTEAAAAQREEWKMFIGGLSWDTTKKDLKDYFSKFGEVVDCTLKLDPITGRSRGFGFVLFKESESVDKVMDQKEHKLNGKVIDPKRAKAMKTKEPVKKIFVGGLSPDTPEEKIREYFGGFGEVESIELPMDNKTNKRRGFCFITFKEEEPVKKIMEKKYHNVGLSKCEIKVAMSKEQYQQQQQWGSRGGFAGRARGRGGGPSQNWNQGYSNYWNQGYGNYGYNSQGYGGYGGYDYTGYNNYYGYGDYSNQQSGYGKVSRRGGHQNSYKPY.

A disordered region spans residues 1–91; that stretch reads MSEEQFGGDG…SSPRHTEAAA (91 aa). Position 2 is an N-acetylserine (Ser-2). Residues 11 to 43 show a composition bias toward low complexity; the sequence is AAAAATAAVGGSAGEQEGAMVAAAAQGPAAAAG. Residues 44-58 show a composition bias toward gly residues; that stretch reads SGSGGGGSAAGGTEG. Residues 64-73 are compositionally biased toward basic and acidic residues; the sequence is EGAKIDASKN. Position 71 is a phosphoserine (Ser-71). Lys-72 is covalently cross-linked (Glycyl lysine isopeptide (Lys-Gly) (interchain with G-Cter in SUMO2)). Residues Ser-80, Ser-82, and Ser-83 each carry the phosphoserine modification. RRM domains are found at residues 97 to 179 and 182 to 261; these read WKMF…KTKE and KKIF…MSKE. N6-methyllysine is present on Lys-119. Thr-127 bears the Phosphothreonine mark. Residue Lys-129 forms a Glycyl lysine isopeptide (Lys-Gly) (interchain with G-Cter in SUMO2) linkage. Lys-165 bears the N6-acetyllysine mark. At Ser-190 the chain carries Phosphoserine. Thr-193 bears the Phosphothreonine mark. Lys-197 is covalently cross-linked (Glycyl lysine isopeptide (Lys-Gly) (interchain with G-Cter in SUMO2)). Residues Lys-243 and Lys-251 each carry the N6-acetyllysine modification. 2 positions are modified to omega-N-methylarginine: Glu-261 and Tyr-263. A Phosphoserine modification is found at Ser-271. 4 positions are modified to omega-N-methylarginine: Arg-272, Arg-278, Arg-280, and Arg-282. Asymmetric dimethylarginine; alternate is present on Arg-345. Arg-345 carries the post-translational modification Dimethylated arginine; alternate. The residue at position 345 (Arg-345) is an Omega-N-methylarginine; alternate.

Identified in a IGF2BP1-dependent mRNP granule complex containing untranslated mRNAs. Part of a complex associated with the FOS mCRD domain and consisting of PABPC1, PAIP1, CSDE1/UNR and SYNCRIP. Interacts with IGF2BP2. Interacts with GTPBP1. Interacts with EIF4G1; the interaction requires RNA. Interacts with EIF3B and RPS3. Methylated by PRMT1, in an insulin-dependent manner. The PRMT1-mediated methylation regulates its phosphorylation. Post-translationally, arg-345 is dimethylated, probably to asymmetric dimethylarginine.

The protein localises to the nucleus. It localises to the cytoplasm. Functionally, binds with high affinity to RNA molecules that contain AU-rich elements (AREs) found within the 3'-UTR of many proto-oncogenes and cytokine mRNAs. Also binds to double- and single-stranded DNA sequences in a specific manner and functions a transcription factor. Each of the RNA-binding domains specifically can bind solely to a single-stranded non-monotonous 5'-UUAG-3' sequence and also weaker to the single-stranded 5'-TTAGGG-3' telomeric DNA repeat. Binds RNA oligonucleotides with 5'-UUAGGG-3' repeats more tightly than the telomeric single-stranded DNA 5'-TTAGGG-3' repeats. Binding of RRM1 to DNA inhibits the formation of DNA quadruplex structure which may play a role in telomere elongation. May be involved in translationally coupled mRNA turnover. Implicated with other RNA-binding proteins in the cytoplasmic deadenylation/translational and decay interplay of the FOS mRNA mediated by the major coding-region determinant of instability (mCRD) domain. May play a role in the regulation of the rhythmic expression of circadian clock core genes. Directly binds to the 3'UTR of CRY1 mRNA and induces CRY1 rhythmic translation. May also be involved in the regulation of PER2 translation. In Mus musculus (Mouse), this protein is Heterogeneous nuclear ribonucleoprotein D0 (Hnrnpd).